Reading from the N-terminus, the 488-residue chain is Inosine-5'-monophosphate dehydrogenase (488 aa).

CBS domains lie at 95-153 (VISN…SIKI) and 157-216 (MTQE…AKDE). Residues Asp250 and 300-302 (GIG) each bind NAD(+). 2 residues coordinate K(+): Gly302 and Gly304. Position 305 (Ser305) interacts with IMP. Cys307 contacts K(+). Residue Cys307 is the Thioimidate intermediate of the active site. Residues 340–342 (DGG), 363–364 (GS), and 387–391 (YRGMG) contribute to the IMP site. The active-site Proton acceptor is the Arg403. An IMP-binding site is contributed by Glu417. A disordered region spans residues 468 to 488 (GLAESHPHNIQITKESPNYSF). Glu471, Ser472, and His473 together coordinate K(+). The span at 475-488 (HNIQITKESPNYSF) shows a compositional bias: polar residues.

This sequence belongs to the IMPDH/GMPR family. As to quaternary structure, homotetramer. K(+) is required as a cofactor.

The catalysed reaction is IMP + NAD(+) + H2O = XMP + NADH + H(+). Its pathway is purine metabolism; XMP biosynthesis via de novo pathway; XMP from IMP: step 1/1. With respect to regulation, mycophenolic acid (MPA) is a non-competitive inhibitor that prevents formation of the closed enzyme conformation by binding to the same site as the amobile flap. In contrast, mizoribine monophosphate (MZP) is a competitive inhibitor that induces the closed conformation. MPA is a potent inhibitor of mammalian IMPDHs but a poor inhibitor of the bacterial enzymes. MZP is a more potent inhibitor of bacterial IMPDH. In terms of biological role, catalyzes the conversion of inosine 5'-phosphate (IMP) to xanthosine 5'-phosphate (XMP), the first committed and rate-limiting step in the de novo synthesis of guanine nucleotides, and therefore plays an important role in the regulation of cell growth. The protein is Inosine-5'-monophosphate dehydrogenase of Staphylococcus aureus (strain MW2).